The chain runs to 255 residues: uncharacterized protein (255 aa).

Over residues 1–10 (MSDSIHRRKV) the composition is skewed to basic residues. Residues 1–78 (MSDSIHRRKV…SPMRGLPMEE (78 aa)) are disordered. Basic and acidic residues predominate over residues 44 to 61 (VFERSFSEPSLNRHRDGQ).

This is an uncharacterized protein from Arabidopsis thaliana (Mouse-ear cress).